The sequence spans 627 residues: Interferon-induced GTP-binding protein MxB (627 aa).

Residues 34 to 307 (DLALPAIAVI…LVHHIQRSLP (274 aa)) form the Dynamin-type G domain. Residues 44–51 (GDQSSGKS) form a G1 motif region. 44-51 (GDQSSGKS) is a GTP binding site. The tract at residues 69 to 71 (VTR) is G2 motif. The interval 145-148 (DLPG) is G3 motif. GTP contacts are provided by residues 145-149 (DLPGI) and 214-217 (TKPD). Residues 214–217 (TKPD) form a G4 motif region. The G5 motif stretch occupies residues 246–249 (RCRG). The region spanning 541-627 (LSEMKLHLES…MKAQNLLATY (87 aa)) is the GED domain.

Belongs to the TRAFAC class dynamin-like GTPase superfamily. Dynamin/Fzo/YdjA family.

The protein localises to the cytoplasm. This Danio rerio (Zebrafish) protein is Interferon-induced GTP-binding protein MxB (mxb).